Here is a 295-residue protein sequence, read N- to C-terminus: 4-hydroxy-tetrahydrodipicolinate synthase (295 aa).

Threonine 47 provides a ligand contact to pyruvate. Residue tyrosine 135 is the Proton donor/acceptor of the active site. Lysine 163 functions as the Schiff-base intermediate with substrate in the catalytic mechanism. Isoleucine 206 contacts pyruvate.

Belongs to the DapA family. In terms of assembly, homodimer.

Its subcellular location is the cytoplasm. The enzyme catalyses L-aspartate 4-semialdehyde + pyruvate = (2S,4S)-4-hydroxy-2,3,4,5-tetrahydrodipicolinate + H2O + H(+). It participates in amino-acid biosynthesis; L-lysine biosynthesis via DAP pathway; (S)-tetrahydrodipicolinate from L-aspartate: step 3/4. In terms of biological role, catalyzes the condensation of (S)-aspartate-beta-semialdehyde [(S)-ASA] and pyruvate to 4-hydroxy-tetrahydrodipicolinate (HTPA). The polypeptide is 4-hydroxy-tetrahydrodipicolinate synthase (Staphylococcus aureus (strain MSSA476)).